The chain runs to 129 residues: MNASISLLCFALLLISPFCLGYSDEERESDSLRVAEILQTSKDDESKINRTQELLDIFRRLAPSLSPEDRERIERSIKEHTDEILIDGVPSQGGRKTKYVGKILSPVAQGLAIGFFEELGGSLSRLFTG.

Positions 1 to 21 (MNASISLLCFALLLISPFCLG) are cleaved as a signal peptide.

Belongs to the Turandot family.

Its subcellular location is the secreted. Its function is as follows. A humoral factor that may play a role in stress tolerance. The chain is Protein Turandot C from Drosophila sechellia (Fruit fly).